The chain runs to 494 residues: MAWLGIGMGRQIVPVLVFVAVLCSGVDASFNRYSFPKDFIFGTGSAAYQYEGAAKEGGKILNGDTGDVADDFYHRYKEDVNLLKDMNMDAFRFSISWSRILPNGTLSGGVNKEGVAFYNNLINEIIAKGMKPFVTIFHWDTPQALESKYGGFLSENIIKDYVDFAEVCFREFGDRVKFWATFNEPWTYCSQGYGTGIHALGRCSPYVSTSCAGGDSSREPYLAAHHVILAHATAVHLYRTKYQPTQHGQIGITAVSHWFVPYNDTAADRRVVQRSLDFMYGWFLDPIVHGDYPGTMRGWLGARLPAFTAEQAAAVRGSYDFIGVNYYTTYYAKSVPLPSSNRLSYDTDIRANTTGFRNGKPIGPQEFTPIFFNYPPGLRELLLYTKRRYNNPIIYVTENGIAEGNNKSLPITEALKDGHRIEFHSKHLQFVNHAIKNGVNVKGYFTWTFMDCFEWGDGYLDRFGLIYIDRLNNLKRYHKQSSYWIANFLKRKKY.

Residues 1–28 (MAWLGIGMGRQIVPVLVFVAVLCSGVDA) form the signal peptide. Glutamine 49 is an a beta-D-glucoside binding site. Residue asparagine 103 is glycosylated (N-linked (GlcNAc...) asparagine). A beta-D-glucoside is bound by residues histidine 138 and 183-184 (NE). The active-site Proton donor is glutamate 184. An intrachain disulfide couples cysteine 203 to cysteine 211. Asparagine 263 carries an N-linked (GlcNAc...) asparagine glycan. Tyrosine 327 provides a ligand contact to a beta-D-glucoside. Asparagine 352 carries an N-linked (GlcNAc...) asparagine glycan. Glutamate 398 contributes to the a beta-D-glucoside binding site. The Nucleophile role is filled by glutamate 398. Asparagine 406 is a glycosylation site (N-linked (GlcNAc...) asparagine). A beta-D-glucoside contacts are provided by residues tryptophan 447, 454–455 (EW), and phenylalanine 463.

The protein belongs to the glycosyl hydrolase 1 family.

The catalysed reaction is Hydrolysis of terminal, non-reducing beta-D-glucosyl residues with release of beta-D-glucose.. The chain is Beta-glucosidase 29 (BGLU29) from Oryza sativa subsp. japonica (Rice).